We begin with the raw amino-acid sequence, 94 residues long: Pyrimidine/purine nucleoside phosphorylase (94 aa).

It belongs to the nucleoside phosphorylase PpnP family.

The catalysed reaction is a purine D-ribonucleoside + phosphate = a purine nucleobase + alpha-D-ribose 1-phosphate. It catalyses the reaction adenosine + phosphate = alpha-D-ribose 1-phosphate + adenine. The enzyme catalyses cytidine + phosphate = cytosine + alpha-D-ribose 1-phosphate. It carries out the reaction guanosine + phosphate = alpha-D-ribose 1-phosphate + guanine. The catalysed reaction is inosine + phosphate = alpha-D-ribose 1-phosphate + hypoxanthine. It catalyses the reaction thymidine + phosphate = 2-deoxy-alpha-D-ribose 1-phosphate + thymine. The enzyme catalyses uridine + phosphate = alpha-D-ribose 1-phosphate + uracil. It carries out the reaction xanthosine + phosphate = alpha-D-ribose 1-phosphate + xanthine. Its function is as follows. Catalyzes the phosphorolysis of diverse nucleosides, yielding D-ribose 1-phosphate and the respective free bases. Can use uridine, adenosine, guanosine, cytidine, thymidine, inosine and xanthosine as substrates. Also catalyzes the reverse reactions. This chain is Pyrimidine/purine nucleoside phosphorylase, found in Aeromonas hydrophila subsp. hydrophila (strain ATCC 7966 / DSM 30187 / BCRC 13018 / CCUG 14551 / JCM 1027 / KCTC 2358 / NCIMB 9240 / NCTC 8049).